The chain runs to 118 residues: Large ribosomal subunit protein bL20 (118 aa).

It belongs to the bacterial ribosomal protein bL20 family.

Functionally, binds directly to 23S ribosomal RNA and is necessary for the in vitro assembly process of the 50S ribosomal subunit. It is not involved in the protein synthesizing functions of that subunit. The protein is Large ribosomal subunit protein bL20 of Yersinia pseudotuberculosis serotype O:1b (strain IP 31758).